The following is a 656-amino-acid chain: Bifunctional protein ThiO/ThiG (656 aa).

Residues 1-395 (MQTTSDVLII…HAAENSEGSK (395 aa)) form a thiO region. Residues 7 to 21 (VLIIGGGIIGLAIAV) and 48 to 50 (AGM) contribute to the FAD site. Residue Glu-56 coordinates glycine. An FAD-binding site is contributed by Val-169. Residues Arg-298 and Arg-324 each coordinate glycine. 322–328 (HYRNGIL) contacts FAD. The thiG stretch occupies residues 396–656 (DLLEIAGRKF…ASSPLTGLVG (261 aa)). The active-site Schiff-base intermediate with DXP is the Lys-498. Residues Gly-559, 585–586 (AG), and 607–608 (NS) contribute to the 1-deoxy-D-xylulose 5-phosphate site.

This sequence in the N-terminal section; belongs to the DAO family. ThiO subfamily. The protein in the C-terminal section; belongs to the ThiG family. In terms of assembly, interacts with ThiH and ThiS. It depends on FAD as a cofactor.

The protein resides in the cytoplasm. The catalysed reaction is glycine + O2 + H2O = glyoxylate + H2O2 + NH4(+). It carries out the reaction [ThiS sulfur-carrier protein]-C-terminal-Gly-aminoethanethioate + 2-iminoacetate + 1-deoxy-D-xylulose 5-phosphate = [ThiS sulfur-carrier protein]-C-terminal Gly-Gly + 2-[(2R,5Z)-2-carboxy-4-methylthiazol-5(2H)-ylidene]ethyl phosphate + 2 H2O + H(+). Its pathway is cofactor biosynthesis; thiamine diphosphate biosynthesis. In terms of biological role, catalyzes the FAD-dependent oxidative deamination of glycine. Is essential for thiamine biosynthesis since the oxidation of glycine catalyzed by ThiO generates the glycine imine intermediate (dehydroglycine) required for the biosynthesis of the thiazole ring of thiamine pyrophosphate. Functionally, catalyzes the rearrangement of 1-deoxy-D-xylulose 5-phosphate (DXP) to produce the thiazole phosphate moiety of thiamine. Sulfur is provided by the thiocarboxylate moiety of the carrier protein ThiS. In vitro, sulfur can be provided by H(2)S. This Synechocystis sp. (strain ATCC 27184 / PCC 6803 / Kazusa) protein is Bifunctional protein ThiO/ThiG (thiO/thiG).